Consider the following 450-residue polypeptide: Phospho-2-dehydro-3-deoxyheptonate aldolase (450 aa).

Over residues 1-13 the composition is skewed to polar residues; sequence MTVNAKTSPSAGN. Positions 1-20 are disordered; sequence MTVNAKTSPSAGNTWRDLPA.

It belongs to the class-II DAHP synthase family. Homodimer.

It catalyses the reaction D-erythrose 4-phosphate + phosphoenolpyruvate + H2O = 7-phospho-2-dehydro-3-deoxy-D-arabino-heptonate + phosphate. It functions in the pathway metabolic intermediate biosynthesis; chorismate biosynthesis; chorismate from D-erythrose 4-phosphate and phosphoenolpyruvate: step 1/7. The polypeptide is Phospho-2-dehydro-3-deoxyheptonate aldolase (aroH) (Streptomyces coelicolor (strain ATCC BAA-471 / A3(2) / M145)).